A 393-amino-acid chain; its full sequence is NAD(P)H-quinone oxidoreductase subunit H, chloroplastic (393 aa).

Belongs to the complex I 49 kDa subunit family. NDH is composed of at least 16 different subunits, 5 of which are encoded in the nucleus.

Its subcellular location is the plastid. The protein resides in the chloroplast thylakoid membrane. It catalyses the reaction a plastoquinone + NADH + (n+1) H(+)(in) = a plastoquinol + NAD(+) + n H(+)(out). The catalysed reaction is a plastoquinone + NADPH + (n+1) H(+)(in) = a plastoquinol + NADP(+) + n H(+)(out). Functionally, NDH shuttles electrons from NAD(P)H:plastoquinone, via FMN and iron-sulfur (Fe-S) centers, to quinones in the photosynthetic chain and possibly in a chloroplast respiratory chain. The immediate electron acceptor for the enzyme in this species is believed to be plastoquinone. Couples the redox reaction to proton translocation, and thus conserves the redox energy in a proton gradient. The protein is NAD(P)H-quinone oxidoreductase subunit H, chloroplastic of Acorus calamus var. americanus (American sweet flag).